Consider the following 282-residue polypeptide: Nucleotide-binding protein ABO_0549 (282 aa).

8-15 (GRSGSGKT) contributes to the ATP binding site. 59 to 62 (DARN) contacts GTP.

It belongs to the RapZ-like family.

Its function is as follows. Displays ATPase and GTPase activities. This chain is Nucleotide-binding protein ABO_0549, found in Alcanivorax borkumensis (strain ATCC 700651 / DSM 11573 / NCIMB 13689 / SK2).